A 275-amino-acid polypeptide reads, in one-letter code: Polyamine aminopropyltransferase 1 (275 aa).

Positions 2 to 235 constitute a PABS domain; sequence ELWFTEKQTK…GLWTFTIGSK (234 aa). S-methyl-5'-thioadenosine is bound at residue glutamine 31. Spermidine is bound by residues histidine 62 and aspartate 86. S-methyl-5'-thioadenosine contacts are provided by residues glutamate 106 and 137–138; that span reads DG. Aspartate 155 functions as the Proton acceptor in the catalytic mechanism. A spermidine-binding site is contributed by 155–158; it reads DSTE. S-methyl-5'-thioadenosine is bound at residue proline 162.

This sequence belongs to the spermidine/spermine synthase family. In terms of assembly, homodimer or homotetramer.

Its subcellular location is the cytoplasm. It catalyses the reaction S-adenosyl 3-(methylsulfanyl)propylamine + putrescine = S-methyl-5'-thioadenosine + spermidine + H(+). Its pathway is amine and polyamine biosynthesis; spermidine biosynthesis; spermidine from putrescine: step 1/1. Functionally, catalyzes the irreversible transfer of a propylamine group from the amino donor S-adenosylmethioninamine (decarboxy-AdoMet) to putrescine (1,4-diaminobutane) to yield spermidine. The polypeptide is Polyamine aminopropyltransferase 1 (Bacillus cereus (strain ATCC 14579 / DSM 31 / CCUG 7414 / JCM 2152 / NBRC 15305 / NCIMB 9373 / NCTC 2599 / NRRL B-3711)).